Reading from the N-terminus, the 237-residue chain is Ribonuclease PH (237 aa).

Phosphate is bound by residues Arg86 and 124–126 (GTR).

This sequence belongs to the RNase PH family. As to quaternary structure, homohexameric ring arranged as a trimer of dimers.

It carries out the reaction tRNA(n+1) + phosphate = tRNA(n) + a ribonucleoside 5'-diphosphate. Functionally, phosphorolytic 3'-5' exoribonuclease that plays an important role in tRNA 3'-end maturation. Removes nucleotide residues following the 3'-CCA terminus of tRNAs; can also add nucleotides to the ends of RNA molecules by using nucleoside diphosphates as substrates, but this may not be physiologically important. Probably plays a role in initiation of 16S rRNA degradation (leading to ribosome degradation) during starvation. The protein is Ribonuclease PH of Shewanella oneidensis (strain ATCC 700550 / JCM 31522 / CIP 106686 / LMG 19005 / NCIMB 14063 / MR-1).